The primary structure comprises 430 residues: tRNA(Ile)-lysidine synthase (430 aa).

27–32 (SGGSDS) provides a ligand contact to ATP.

The protein belongs to the tRNA(Ile)-lysidine synthase family.

The protein localises to the cytoplasm. The catalysed reaction is cytidine(34) in tRNA(Ile2) + L-lysine + ATP = lysidine(34) in tRNA(Ile2) + AMP + diphosphate + H(+). Its function is as follows. Ligates lysine onto the cytidine present at position 34 of the AUA codon-specific tRNA(Ile) that contains the anticodon CAU, in an ATP-dependent manner. Cytidine is converted to lysidine, thus changing the amino acid specificity of the tRNA from methionine to isoleucine. In Rickettsia akari (strain Hartford), this protein is tRNA(Ile)-lysidine synthase.